Consider the following 264-residue polypeptide: MNEQFIQFPQIDPIIFSIGPIALRWYGLMYLIGFGFAYWLGMRRAKNSNGVWTTEQVDQLIYTCFWGVILGGRIGDVFFYNFDRLLQDPMFLFRIWEGGMSFHGGLIGVIVAMIWVSFRQKRSFWNTADFIAPLIPFGLGMGRIGNFINDELWGRITDVPWAVLFPSGGYLPRHPSQLYEFFLEGVVLFFILNWFIKKPRPAGSVAGLFLIGYGVFRFLVEYVRDIDPNVNTVDDLITRGQLLSLPMIIGGLAIMIWAYSRKKA.

Transmembrane regions (helical) follow at residues 14–34, 60–80, 98–118, 128–148, 176–196, 203–223, and 240–260; these read IIFSIGPIALRWYGLMYLIGF, LIYTCFWGVILGGRIGDVFFY, GGMSFHGGLIGVIVAMIWVSF, ADFIAPLIPFGLGMGRIGNFI, SQLYEFFLEGVVLFFILNWFI, GSVAGLFLIGYGVFRFLVEYV, and GQLLSLPMIIGGLAIMIWAYS. Arg143 lines the a 1,2-diacyl-sn-glycero-3-phospho-(1'-sn-glycerol) pocket.

The protein belongs to the Lgt family.

It localises to the cell inner membrane. It catalyses the reaction L-cysteinyl-[prolipoprotein] + a 1,2-diacyl-sn-glycero-3-phospho-(1'-sn-glycerol) = an S-1,2-diacyl-sn-glyceryl-L-cysteinyl-[prolipoprotein] + sn-glycerol 1-phosphate + H(+). Its pathway is protein modification; lipoprotein biosynthesis (diacylglyceryl transfer). Its function is as follows. Catalyzes the transfer of the diacylglyceryl group from phosphatidylglycerol to the sulfhydryl group of the N-terminal cysteine of a prolipoprotein, the first step in the formation of mature lipoproteins. The polypeptide is Phosphatidylglycerol--prolipoprotein diacylglyceryl transferase (Actinobacillus pleuropneumoniae serotype 7 (strain AP76)).